The sequence spans 305 residues: Transmembrane epididymal protein 1 (305 aa).

A helical membrane pass occupies residues 4–24; sequence FIGHISPGLFLVFYGLYQAII. N-linked (GlcNAc...) asparagine glycosylation occurs at asparagine 32. 6 consecutive transmembrane segments (helical) span residues 51-71, 100-120, 124-144, 159-179, 187-207, and 223-243; these read LWQI…LIVY, LTMF…RSVL, LVLL…LLLV, SLLI…LWAP, IETF…FILF, and IMLV…CMLG. The disordered stretch occupies residues 285-305; sequence EQQDRDDQAPLLSKSSPCDRA.

It belongs to the TMEM45 family.

Its subcellular location is the membrane. This Rattus norvegicus (Rat) protein is Transmembrane epididymal protein 1 (Teddm1).